We begin with the raw amino-acid sequence, 152 residues long: MFRGATLVNLDSKGRLSVPTRYREQLLENAVGQMVCTIDIHHPCLLLYPLPEWEIIEQKLSRLSSMNPVERRVQRLLLGHASECQMDGAGRLLIAPVLRQHAGLTKEVMLVGQFNKFELWDETTWHQQVKEDIDAEQLATGDLSERLQDLSL.

SpoVT-AbrB domains follow at residues alanine 5–glutamate 52 and alanine 81–threonine 124.

The protein belongs to the MraZ family. In terms of assembly, forms oligomers.

The protein localises to the cytoplasm. It is found in the nucleoid. In terms of biological role, negatively regulates its own expression and that of the subsequent genes in the proximal part of the division and cell wall (dcw) gene cluster. Acts by binding directly to DNA. May also regulate the expression of genes outside the dcw cluster. The sequence is that of Transcriptional regulator MraZ from Shigella sonnei (strain Ss046).